Consider the following 131-residue polypeptide: D-ribose pyranase (131 aa).

His20 acts as the Proton donor in catalysis. Substrate contacts are provided by residues Asp28, His98, and 120–122; that span reads FSN.

This sequence belongs to the RbsD / FucU family. RbsD subfamily. In terms of assembly, homodecamer.

It is found in the cytoplasm. The enzyme catalyses beta-D-ribopyranose = beta-D-ribofuranose. The protein operates within carbohydrate metabolism; D-ribose degradation; D-ribose 5-phosphate from beta-D-ribopyranose: step 1/2. Its function is as follows. Catalyzes the interconversion of beta-pyran and beta-furan forms of D-ribose. The polypeptide is D-ribose pyranase (Oenococcus oeni (strain ATCC BAA-331 / PSU-1)).